The primary structure comprises 205 residues: IVSPPVCGNELLENGEECDCGSPANCRNPCCDAASCRLHSWVECESGECCDQCRFVTAGTECRATRSECDLAGQCTGQSADCPIDRFHRNGQPCLQNYGYCYNGKCPIMHHQCYYLFGANATVAQDACFEENKNGIGDFYCRKQSDRLIPCAPEDVKCGRLFCEILPNTRCKHAPGDNGMVDPGTKCEDKKVCFNRKCVDVNTVY.

A Disintegrin domain is found at Pro-4–Asn-90. 9 disulfide bridges follow: Cys-7–Cys-26, Cys-18–Cys-36, Cys-62–Cys-82, Cys-69–Cys-94, Cys-101–Cys-106, Cys-113–Cys-128, Cys-151–Cys-158, Cys-163–Cys-171, and Cys-193–Cys-198. Residues Glu-68–Asp-70 carry the D/ECD-tripeptide motif. Asn-120 carries N-linked (GlcNAc...) asparagine glycosylation.

This sequence belongs to the venom metalloproteinase (M12B) family. P-III subfamily. P-IIIb sub-subfamily. As to quaternary structure, monomer. As to expression, expressed by the venom gland.

Its subcellular location is the secreted. Inhibits platelet aggregation induced by thrombin and arachidonic acid with IC(50) of 40 and 50 nM respectively (in rabbit platetelet-rich plasma). It also inhibits the adhesion of melanoma tumor cells on fibrinogen and fibronectin, by interfering with the function of alpha-V/beta-3 (ITGAV/ITGB3) and, to a lesser extent, with alpha-V/beta-6 (ITGAV/ITGB6) and alpha-5/beta-1 (ITGA5/ITGB1) integrins. In Macrovipera lebetina transmediterranea (Blunt-nosed viper), this protein is Disintegrin-like leberagin-C.